The primary structure comprises 154 residues: 6,7-dimethyl-8-ribityllumazine synthase (154 aa).

5-amino-6-(D-ribitylamino)uracil is bound by residues Phe-22, Ser-56–Glu-58, and Ala-80–Ile-82. Ser-85–Thr-86 is a binding site for (2S)-2-hydroxy-3-oxobutyl phosphate. The active-site Proton donor is the His-88. 5-amino-6-(D-ribitylamino)uracil is bound at residue Tyr-113. Position 127 (Arg-127) interacts with (2S)-2-hydroxy-3-oxobutyl phosphate.

The protein belongs to the DMRL synthase family. In terms of assembly, forms an icosahedral capsid composed of 60 subunits, arranged as a dodecamer of pentamers.

The catalysed reaction is (2S)-2-hydroxy-3-oxobutyl phosphate + 5-amino-6-(D-ribitylamino)uracil = 6,7-dimethyl-8-(1-D-ribityl)lumazine + phosphate + 2 H2O + H(+). The protein operates within cofactor biosynthesis; riboflavin biosynthesis; riboflavin from 2-hydroxy-3-oxobutyl phosphate and 5-amino-6-(D-ribitylamino)uracil: step 1/2. Its function is as follows. Catalyzes the formation of 6,7-dimethyl-8-ribityllumazine by condensation of 5-amino-6-(D-ribitylamino)uracil with 3,4-dihydroxy-2-butanone 4-phosphate. This is the penultimate step in the biosynthesis of riboflavin. This is 6,7-dimethyl-8-ribityllumazine synthase from Sulfurihydrogenibium sp. (strain YO3AOP1).